The chain runs to 1300 residues: MARPKLWPWGILLLVSLLSAGFNLDTMNVCPSLDIRSEVAELRRLENCSVVEGHLQILLMFTATGEDFRSLSFPHLTQVTDYLLLFRVYGLESLRDLFPNLAVIRGAHLFLGYALVIFEMPHLRDVGLPALGAVLHGSVRVEKNQELCHLSTIDWGLLQPTPSTNYIVGNKLGEECADVCPGTLGAAGEPCARTTFNGHTDYRCWTSSHCQRVCPCPQGLACTISGECCHTECLGGCSQPEDPRACVACRHFYYQSACHRACPLGTYEHESWRCVTAESCANLRSVPGRASTFGIHQGKCLAQCPPGFTRNGSSIFCHKCEGLCPKECKVGTKTIDSVQAAQDLVGCTHVEGSLILNLRRGYNLEPELQRSLGLVETITGFLKIKHSFALVSLSFFKNLKLIRGDTMVDGNYTLYVLDNQNLQQLGPWVSAGLTIPVGKIYFAFNPRLCLEHIYRLEEVTGTRGRQNKAEINPRTNGDRAACQTRTLRFVSNVTEADRILLRWERYEPLEARDLLSFIVYYKESPFQNATEHVGPDACGSQSWNLLDVELPLSRTQEPGVILAPLKPWTQYAVFVRAITLTTAEDSPHQGAQSPIVYLWTLPAAPTVPQDVISSSNSSSHLLVRWKPPTQRNGNITYYLVLWQRLAEDGDLYLNDYCHRGLRLPTSNHDPRFDREDGDLEAELELGCCPCQHAPPGQVLPALEAQEASFQKKFENFLHNAITIPKPPWKVTSIHRNLQRDAGRHRRAIGSPRPGGNSSDFEIQEDKVPRERAVLGGLRHFTEYRIDIHACNHAAHIVGCSAATFVFARTMPRREADDIPGKLSWEAASKSSVLLRWFEPPDPNGLILKYEIKYRRLGEEATVLCVSRLRYAKVGGVQLALLPPGNYSARVRATSLAGNGSWTDSVAFYIPGPEEEDSGGLHILLTVTPAGLMLLIILAALGFFYSRKRNGTLYTSVNPEYLSASDMYIPDEWEVPREQISIIRELGQGSFGMVYEGVAKGLEAGEESTPVALKTVNELASPRERIEFLKEASVMKAFQCHHVVRLLGVVSQGQPTLVIMELMTRGDLKSHLRSLRPEAENNPGIPRPALGDMIQMAGEIADGMAYLAANKFVHRDLAARNCMVSQDFTVKIGDFGMTRDVYETDYYRKGGKGLLPVRWMAPESLKDGIFTTHSDVWSFGVVLWEIVTLAEQPYQGLSNEQVLKFVMDGGVLEELEDCPHQLQELMSSCWQQNPRLRPTFTQILNSIQKELRPSFRLLSFYHSPECQGGCGLQPTTDAESSSPPTSKGASDCSLQNGGPEH.

A signal peptide spans 1–26 (MARPKLWPWGILLLVSLLSAGFNLDT). N-linked (GlcNAc...) asparagine glycosylation is present at Asn-47. 9 cysteine pairs are disulfide-bonded: Cys-214-Cys-222, Cys-216-Cys-228, Cys-229-Cys-237, Cys-233-Cys-246, Cys-249-Cys-258, Cys-262-Cys-274, Cys-280-Cys-300, Cys-304-Cys-317, and Cys-320-Cys-324. Asn-311 carries N-linked (GlcNAc...) asparagine glycosylation. Asn-411, Asn-492, Asn-528, Asn-616, Asn-634, Asn-756, Asn-885, and Asn-898 each carry an N-linked (GlcNAc...) asparagine glycan. 2 Fibronectin type-III domains span residues 483–603 (QTRT…TLPA) and 607–707 (VPQD…AQEA). Cys-657 and Cys-864 are disulfide-bonded. Residues 740–762 (DAGRHRRAIGSPRPGGNSSDFEI) are disordered. At 747–921 (AIGSPRPGGN…PEEEDSGGLH (175 aa)) the chain is on the extracellular side. One can recognise a Fibronectin type-III 3 domain in the interval 818 to 912 (IPGKLSWEAA…DSVAFYIPGP (95 aa)). Residues 922-943 (ILLTVTPAGLMLLIILAALGFF) traverse the membrane as a helical segment. Residues 944–1300 (YSRKRNGTLY…CSLQNGGPEH (357 aa)) lie on the Cytoplasmic side of the membrane. Positions 979-1254 (ISIIRELGQG…SIQKELRPSF (276 aa)) constitute a Protein kinase domain. Residues 985–993 (LGQGSFGMV) and Lys-1013 contribute to the ATP site. Catalysis depends on Asp-1115, which acts as the Proton acceptor. Residues Tyr-1145 and Tyr-1146 each carry the phosphotyrosine; by autocatalysis modification. Residues 1270-1300 (GLQPTTDAESSSPPTSKGASDCSLQNGGPEH) are disordered. The span at 1272-1300 (QPTTDAESSSPPTSKGASDCSLQNGGPEH) shows a compositional bias: polar residues.

The protein belongs to the protein kinase superfamily. Tyr protein kinase family. Insulin receptor subfamily. Probable tetramer of 2 alpha and 2 beta chains linked by disulfide bonds. The alpha chains contribute to the formation of the ligand-binding domain, while the beta chains carry the kinase domain. In terms of processing, autophosphorylated on tyrosine residues between pH 7.9 and pH 10.5.

It localises to the membrane. The catalysed reaction is L-tyrosyl-[protein] + ATP = O-phospho-L-tyrosyl-[protein] + ADP + H(+). Functionally, receptor with tyrosine-protein kinase activity. Functions as a pH sensing receptor which is activated by increased extracellular pH. Activates an intracellular signaling pathway that involves IRS1 and AKT1/PKB. This chain is Insulin receptor-related protein (INSRR), found in Cavia porcellus (Guinea pig).